A 331-amino-acid polypeptide reads, in one-letter code: Ferredoxin--NADP reductase (331 aa).

Positions 20, 39, 47, 52, 92, 126, 287, and 328 each coordinate FAD.

Belongs to the ferredoxin--NADP reductase type 2 family. In terms of assembly, homodimer. Requires FAD as cofactor.

It carries out the reaction 2 reduced [2Fe-2S]-[ferredoxin] + NADP(+) + H(+) = 2 oxidized [2Fe-2S]-[ferredoxin] + NADPH. The sequence is that of Ferredoxin--NADP reductase from Bacillus cereus (strain ZK / E33L).